The following is a 450-amino-acid chain: Divalent metal cation transporter MntH (450 aa).

The next 11 membrane-spanning stretches (helical) occupy residues 34-54 (LSFLGPGLLVAVGYMDPGNWI), 61-81 (AQYGYTLLFVILISSLSAMLL), 108-128 (IAIIFWIIAELAIIATDIAEV), 141-161 (IPLIVGALITVLDVFLLLFIM), 170-190 (AIVGTFIFTVLFIFIFEVYIS), 212-232 (GILYIALGIIGATIMPHNLYL), 263-283 (IQLSIAFVVNCLLLVLGASLF), 305-325 (PVLGATMGAIMSTLFAVALLA), 361-381 (SLAVIPVIVCLIIFKGNAAKI), 383-403 (QLLVFSQVFLSIALPFCLIPL), and 422-442 (VNIISWTLIIILSILNVYLIV).

The protein belongs to the NRAMP family.

It localises to the cell membrane. In terms of biological role, h(+)-stimulated, divalent metal cation uptake system. This chain is Divalent metal cation transporter MntH, found in Staphylococcus aureus (strain Mu3 / ATCC 700698).